The following is a 386-amino-acid chain: MDICVRPVWAEIDLDIIANNMKEIRNLVGEKEIIAVVKANAYGHGALDIASTLLENGASRLAVAIITEADELRDAGITAPIMILGYTPINFAENLINNEIEQTVYDVEYAKELSDFALKLGKKAKVHIAIDTGMGRIGFLPNEEGLNKVLEICSLPGVEVIGLFTHFSTSDEKDKTYTYEQFSKLTAFNKALEDNGIHIPLKHASNSGAIMDLPETYLDGVRCGIISYGYYPSEEVKKENLKLKPALTLKTNVAFVKELDEDMYVSYGRTYKTEKKSKIATLPIGYADGYSRLLSGKAKVIIKGQFANVIGRVCMDQCMIDVTHIEDVKIGDEVILLGEENGLKFDANDMAEIMGTINYEILCMISHRVPRIYKKNNEIVKVINYI.

Catalysis depends on Lys38, which acts as the Proton acceptor; specific for D-alanine. Lys38 carries the post-translational modification N6-(pyridoxal phosphate)lysine. Arg136 serves as a coordination point for substrate. Tyr267 acts as the Proton acceptor; specific for L-alanine in catalysis. Met315 is a substrate binding site.

This sequence belongs to the alanine racemase family. Requires pyridoxal 5'-phosphate as cofactor.

The catalysed reaction is L-alanine = D-alanine. It functions in the pathway amino-acid biosynthesis; D-alanine biosynthesis; D-alanine from L-alanine: step 1/1. Catalyzes the interconversion of L-alanine and D-alanine. May also act on other amino acids. The sequence is that of Alanine racemase (alr) from Clostridium perfringens (strain ATCC 13124 / DSM 756 / JCM 1290 / NCIMB 6125 / NCTC 8237 / Type A).